Reading from the N-terminus, the 529-residue chain is Transcription activator of gluconeogenesis ERT1 (529 aa).

The disordered stretch occupies residues 1 to 31 (MCTPDENDYKTSTDPDTSANTNHTLEKKKRK). The span at 14-23 (DPDTSANTNH) shows a compositional bias: polar residues. The segment at residues 40–68 (CVNCSRLHVSCEAKRPCLRCISKGLTATC) is a DNA-binding region (zn(2)-C6 fungal-type). Residues 174 to 193 (SNSTIGNSSNNSPTGTNTSP) are compositionally biased toward low complexity. A disordered region spans residues 174–198 (SNSTIGNSSNNSPTGTNTSPEETEM). A PAS domain is found at 408-480 (TLLEYVKFIA…KTLSKVAYRD (73 aa)).

It belongs to the ERT1/acuK family.

Its subcellular location is the cytoplasm. It is found in the nucleus. Its function is as follows. Transcription factor which regulates nonfermentable carbon utilization. Activator of gluconeogenetic genes like PCK1. Involved in restriction of Ty1 transposition. The protein is Transcription activator of gluconeogenesis ERT1 (ERT1) of Saccharomyces cerevisiae (strain ATCC 204508 / S288c) (Baker's yeast).